Reading from the N-terminus, the 534-residue chain is Arginine--tRNA ligase (534 aa).

A 'HIGH' region motif is present at residues 120–130; the sequence is ANPTGFLHLGH.

Belongs to the class-I aminoacyl-tRNA synthetase family. As to quaternary structure, monomer.

The protein localises to the cytoplasm. The catalysed reaction is tRNA(Arg) + L-arginine + ATP = L-arginyl-tRNA(Arg) + AMP + diphosphate. This Mesomycoplasma hyopneumoniae (strain 232) (Mycoplasma hyopneumoniae) protein is Arginine--tRNA ligase.